The following is a 72-amino-acid chain: Translation initiation factor IF-1 (72 aa).

Residues 1 to 72 (MSKQDVIEVE…TRGRIVYRYK (72 aa)) enclose the S1-like domain.

This sequence belongs to the IF-1 family. As to quaternary structure, component of the 30S ribosomal translation pre-initiation complex which assembles on the 30S ribosome in the order IF-2 and IF-3, IF-1 and N-formylmethionyl-tRNA(fMet); mRNA recruitment can occur at any time during PIC assembly.

Its subcellular location is the cytoplasm. One of the essential components for the initiation of protein synthesis. Stabilizes the binding of IF-2 and IF-3 on the 30S subunit to which N-formylmethionyl-tRNA(fMet) subsequently binds. Helps modulate mRNA selection, yielding the 30S pre-initiation complex (PIC). Upon addition of the 50S ribosomal subunit IF-1, IF-2 and IF-3 are released leaving the mature 70S translation initiation complex. The protein is Translation initiation factor IF-1 of Pelotomaculum thermopropionicum (strain DSM 13744 / JCM 10971 / SI).